A 107-amino-acid polypeptide reads, in one-letter code: Integration host factor subunit alpha (107 aa).

It belongs to the bacterial histone-like protein family. As to quaternary structure, heterodimer of an alpha and a beta chain.

In terms of biological role, this protein is one of the two subunits of integration host factor, a specific DNA-binding protein that functions in genetic recombination as well as in transcriptional and translational control. The protein is Integration host factor subunit alpha of Brucella abortus (strain S19).